The sequence spans 832 residues: Receptor-interacting serine/threonine-protein kinase 4 (832 aa).

The region spanning 22–286 (FTGWEKVGSG…QGNGLNGELI (265 aa)) is the Protein kinase domain. ATP contacts are provided by residues 28 to 36 (VGSGGFGQV) and K51. A Glycyl lysine isopeptide (Lys-Gly) (interchain with G-Cter in ubiquitin) cross-link involves residue K51. The active-site Proton acceptor is D143. A Glycyl lysine isopeptide (Lys-Gly) (interchain with G-Cter in ubiquitin) cross-link involves residue K145. Disordered stretches follow at residues 325 to 368 (QEIT…RLKR) and 389 to 424 (SGVS…GVSS). Over residues 329–342 (SETEDLCEKPDDEV) the composition is skewed to acidic residues. Over residues 343–359 (KETAHDLDVKSPPEPRS) the composition is skewed to basic and acidic residues. Low complexity predominate over residues 403-424 (RSSSESKLPSSGSGKRLSGVSS). ANK repeat units lie at residues 485–514 (SGAS…NPNL), 518–547 (RGST…SVNA), 551–580 (DQWT…SVNE), 584–613 (EGRT…DVSL), 617–647 (DAWL…SVNA), 651–680 (DGRT…DVNV), 684–713 (LAQT…GKEA), 717–746 (DGYT…DVLA), 750–780 (LNQT…DLFD), and 782–811 (QGLS…HINL).

Belongs to the protein kinase superfamily. TKL Ser/Thr protein kinase family. As to quaternary structure, interacts with PRKCB. Interacts with TRAF1, TRAF2, TRAF3 and TRAF5. Interacts with BIRC2/c-IAP1, BIRC3/c-IAP2 and XIAP/BIRC4. Post-translationally, may be phosphorylated by MAP3K2 and MAP3K3. Proteolytically cleaved by during Fas-induced apoptosis. Cleavage at Asp-388 and Asp-426. In terms of processing, polyubiquitinated with 'Lys-48' and 'Lys-63'-linked chains by BIRC2/c-IAP1 and BIRC3/c-IAP2, leading to activation of NF-kappa-B. In terms of tissue distribution, expressed in hair follicles and skin.

The protein localises to the cytoplasm. The protein resides in the membrane. It carries out the reaction L-seryl-[protein] + ATP = O-phospho-L-seryl-[protein] + ADP + H(+). It catalyses the reaction L-threonyl-[protein] + ATP = O-phospho-L-threonyl-[protein] + ADP + H(+). Its function is as follows. Serine/threonine protein kinase. Required for embryonic skin development and correct skin homeostasis in adults, via phosphorylation of PKP1 and subsequent promotion of keratinocyte differentiation and cell adhesion. It is a direct transcriptional target of TP63. Plays a role in NF-kappa-B activation. The sequence is that of Receptor-interacting serine/threonine-protein kinase 4 (RIPK4) from Homo sapiens (Human).